Reading from the N-terminus, the 303-residue chain is Golgi to ER traffic protein 2 (303 aa).

Residues 1 to 168 (MSEQPLSQDE…NAYNIYQQRL (168 aa)) are Cytoplasmic-facing. The disordered stretch occupies residues 19–86 (RQAKMARGKA…DPEDDPDLMD (68 aa)). A compositionally biased stretch (polar residues) spans 31–48 (RLNNILSQGSSVKGTTDP). Residues 169–189 (WKFRFSIIRFAAVLTNFFYHY) form a helical membrane-spanning segment. The Lumenal portion of the chain corresponds to 190 to 216 (LTIQDYSFTSSPHFYVRALAPHPAVNS). The helical transmembrane segment at 217 to 236 (FITWFSTCEVAILASFYLIT) threads the bilayer. Residues 237–280 (SKNNIYANASDGNLLLKGISMGAMVLPQLRAYQPLVIRLAHYWE) lie on the Cytoplasmic side of the membrane. The helical transmembrane segment at 281–301 (VFSMLLGDIFLVVVLFGLVSI) threads the bilayer. Residues 302–303 (YN) are Lumenal-facing.

The protein belongs to the GET2 family. Component of the Golgi to ER traffic (GET) complex, which is composed of GET1, GET2 and GET3. Within the complex, GET1 and GET2 form a heterotetramer which is stabilized by phosphatidylinositol binding and which binds to the GET3 homodimer.

The protein localises to the endoplasmic reticulum membrane. It localises to the golgi apparatus membrane. Required for the post-translational delivery of tail-anchored (TA) proteins to the endoplasmic reticulum. Together with GET1, acts as a membrane receptor for soluble GET3, which recognizes and selectively binds the transmembrane domain of TA proteins in the cytosol. The GET complex cooperates with the HDEL receptor ERD2 to mediate the ATP-dependent retrieval of resident ER proteins that contain a C-terminal H-D-E-L retention signal from the Golgi to the ER. The protein is Golgi to ER traffic protein 2 of Debaryomyces hansenii (strain ATCC 36239 / CBS 767 / BCRC 21394 / JCM 1990 / NBRC 0083 / IGC 2968) (Yeast).